Consider the following 146-residue polypeptide: Acidic phospholipase A2 D (146 aa).

An N-terminal signal peptide occupies residues 1–21 (MNPAHLLILAAVCVSPLGASS). The propeptide occupies 22 to 27 (NRPMPL). 7 cysteine pairs are disulfide-bonded: C38–C98, C53–C145, C55–C71, C70–C126, C77–C119, C87–C112, and C105–C117. Residues Y54, G56, and G58 each coordinate Ca(2+). H74 is a catalytic residue. Residue D75 participates in Ca(2+) binding. D120 is an active-site residue.

It belongs to the phospholipase A2 family. Group I subfamily. D49 sub-subfamily. Ca(2+) is required as a cofactor. In terms of tissue distribution, expressed by the venom gland.

It is found in the secreted. It catalyses the reaction a 1,2-diacyl-sn-glycero-3-phosphocholine + H2O = a 1-acyl-sn-glycero-3-phosphocholine + a fatty acid + H(+). PLA2 catalyzes the calcium-dependent hydrolysis of the 2-acyl groups in 3-sn-phosphoglycerides. The chain is Acidic phospholipase A2 D from Naja sputatrix (Malayan spitting cobra).